The primary structure comprises 63 residues: Conotoxin TeAr193 (63 aa).

The first 22 residues, 1–22 (MRCLPVFVILLLLIASAPSVDA), serve as a signal peptide directing secretion. Residues 23-48 (QPKTKDDIPQASFLDNAKRYLQVLES) constitute a propeptide that is removed on maturation.

It belongs to the conotoxin T superfamily. In terms of processing, contains 2 disulfide bonds that can be either 'C1-C3, C2-C4' or 'C1-C4, C2-C3', since these disulfide connectivities have been observed for conotoxins with cysteine framework V (for examples, see AC P0DQQ7 and AC P81755). In terms of tissue distribution, expressed by the venom duct.

The protein localises to the secreted. The sequence is that of Conotoxin TeAr193 from Conus textile (Cloth-of-gold cone).